A 759-amino-acid polypeptide reads, in one-letter code: Serine/threonine-protein kinase HRK1 (759 aa).

Positions 1–32 (MPNLLSRNPFHGHHNDHHHDRENSSNNPPQLI) are disordered. A Phosphoserine modification is found at S37. Residues 45-162 (KQSNDSLRSE…PPPSKSTSTV (118 aa)) form a disordered region. The span at 59 to 97 (SMKSTTTTTNYTTTNLNNNTHSHSNATSISTNNYNNNYE) shows a compositional bias: low complexity. A compositionally biased stretch (polar residues) spans 113–122 (SPASPKQTHS). A Protein kinase domain is found at 215–722 (GKLGKLLGSG…LDDIFNDEWF (508 aa)). ATP contacts are provided by residues 221-229 (LGSGAGGSV) and K244. The active-site Proton acceptor is D340. 2 positions are modified to phosphoserine: S382 and S472. Polar residues predominate over residues 493-502 (PNTPASIQGK). Disordered regions lie at residues 493-578 (PNTP…GRVD) and 614-682 (AANA…KIIH). A Phosphothreonine modification is found at T495. S498 carries the post-translational modification Phosphoserine. A compositionally biased stretch (acidic residues) spans 510 to 519 (VEEETEENKE). The segment covering 520 to 547 (DDSNNDKESTPDNDKESTIDIKISKNEN) has biased composition (basic and acidic residues). Over residues 614–646 (AANANPDMVPQNNPQQQQQQQQQQQQQQQQQQQ) the composition is skewed to low complexity. A compositionally biased stretch (polar residues) spans 663 to 672 (ASDNKSSQQH).

Belongs to the protein kinase superfamily. Ser/Thr protein kinase family.

It is found in the cytoplasm. It carries out the reaction L-seryl-[protein] + ATP = O-phospho-L-seryl-[protein] + ADP + H(+). It catalyses the reaction L-threonyl-[protein] + ATP = O-phospho-L-threonyl-[protein] + ADP + H(+). In terms of biological role, involved in regulating the activity of the plasma membrane proton pump PMA1. The protein is Serine/threonine-protein kinase HRK1 (HRK1) of Saccharomyces cerevisiae (strain ATCC 204508 / S288c) (Baker's yeast).